A 483-amino-acid chain; its full sequence is Zinc metalloproteinase/disintegrin (483 aa).

The first 20 residues, 1-20 (MIQVLLVTLCLAAFPYQGNS), serve as a signal peptide directing secretion. Residues 21-191 (IILESGNVND…KASQLNLTPE (171 aa)) constitute a propeptide that is removed on maturation. Residues 198-394 (RYIELVVVAD…HNPQCMLNEP (197 aa)) form the Peptidase M12B domain. Ca(2+) is bound by residues E201 and D285. 3 cysteine pairs are disulfide-bonded: C309–C389, C349–C373, and C351–C356. H334 is a Zn(2+) binding site. E335 is an active-site residue. Zn(2+) contacts are provided by H338 and H344. 2 residues coordinate Ca(2+): C389 and N392. A propeptide spanning residues 395–414 (LRTDIVSTPVSGNELWETGE) is cleaved from the precursor. One can recognise a Disintegrin domain in the interval 402 to 483 (TPVSGNELWE…AGCPRNPFHA (82 aa)). 4 cysteine pairs are disulfide-bonded: C425-C448, C439-C445, C444-C469, and C457-C476. The Cell attachment site; atypical (KGD) motif lies at 461 to 463 (KGD).

Belongs to the venom metalloproteinase (M12B) family. P-II subfamily. P-IIe sub-subfamily. As to quaternary structure, heterodimer with piscivostatin-alpha; disulfide-linked (disintegrin). The cofactor is Zn(2+). As to expression, expressed by the venom gland.

The protein resides in the secreted. Functionally, impairs hemostasis in the envenomed animal. Inhibits platelet aggregation induced by ADP. Acts by inhibiting fibrinogen interaction with platelet receptors GPIIb/GPIIIa (ITGA2B/ITGB3). Also inhibits platelet aggregate dissociation in human platelet-rich plasma. In Agkistrodon piscivorus piscivorus (Eastern cottonmouth), this protein is Zinc metalloproteinase/disintegrin.